A 442-amino-acid polypeptide reads, in one-letter code: 3-ketoacyl-CoA thiolase (442 aa).

C105 serves as the catalytic Acyl-thioester intermediate. Active-site proton acceptor residues include H398 and C428.

This sequence belongs to the thiolase-like superfamily. Thiolase family. Heterotetramer of two alpha chains (FadJ) and two beta chains (FadI).

It localises to the cytoplasm. It carries out the reaction an acyl-CoA + acetyl-CoA = a 3-oxoacyl-CoA + CoA. Its pathway is lipid metabolism; fatty acid beta-oxidation. Functionally, catalyzes the final step of fatty acid oxidation in which acetyl-CoA is released and the CoA ester of a fatty acid two carbons shorter is formed. The sequence is that of 3-ketoacyl-CoA thiolase from Aliivibrio fischeri (strain ATCC 700601 / ES114) (Vibrio fischeri).